Consider the following 157-residue polypeptide: 2-C-methyl-D-erythritol 2,4-cyclodiphosphate synthase (157 aa).

A divalent metal cation is bound by residues Asp8 and His10. Residues 8-10 and 34-35 contribute to the 4-CDP-2-C-methyl-D-erythritol 2-phosphate site; these read DVH and HS. His42 is an a divalent metal cation binding site. Residues 56 to 58, 132 to 135, Phe139, and Arg142 each bind 4-CDP-2-C-methyl-D-erythritol 2-phosphate; these read DIG and TTNE.

Belongs to the IspF family. Homotrimer. Requires a divalent metal cation as cofactor.

The catalysed reaction is 4-CDP-2-C-methyl-D-erythritol 2-phosphate = 2-C-methyl-D-erythritol 2,4-cyclic diphosphate + CMP. The protein operates within isoprenoid biosynthesis; isopentenyl diphosphate biosynthesis via DXP pathway; isopentenyl diphosphate from 1-deoxy-D-xylulose 5-phosphate: step 4/6. In terms of biological role, involved in the biosynthesis of isopentenyl diphosphate (IPP) and dimethylallyl diphosphate (DMAPP), two major building blocks of isoprenoid compounds. Catalyzes the conversion of 4-diphosphocytidyl-2-C-methyl-D-erythritol 2-phosphate (CDP-ME2P) to 2-C-methyl-D-erythritol 2,4-cyclodiphosphate (ME-CPP) with a corresponding release of cytidine 5-monophosphate (CMP). This chain is 2-C-methyl-D-erythritol 2,4-cyclodiphosphate synthase, found in Symbiobacterium thermophilum (strain DSM 24528 / JCM 14929 / IAM 14863 / T).